A 476-amino-acid polypeptide reads, in one-letter code: Bifunctional protein GlmU (476 aa).

The interval 1 to 232 (MDNLAAIILA…PVEVMGINDR (232 aa)) is pyrophosphorylase. UDP-N-acetyl-alpha-D-glucosamine is bound by residues 9–12 (LAAG), lysine 23, glutamine 75, and 80–81 (GT). Aspartate 105 is a Mg(2+) binding site. Positions 142, 157, 172, and 230 each coordinate UDP-N-acetyl-alpha-D-glucosamine. Asparagine 230 serves as a coordination point for Mg(2+). The interval 233 to 253 (VQLAEAARHARRRIAEEHMLN) is linker. Residues 254–476 (GVTLVDPAAT…EGWKLRKRDQ (223 aa)) form an N-acetyltransferase region. UDP-N-acetyl-alpha-D-glucosamine contacts are provided by arginine 353 and lysine 371. Catalysis depends on histidine 383, which acts as the Proton acceptor. 2 residues coordinate UDP-N-acetyl-alpha-D-glucosamine: tyrosine 386 and asparagine 397. Acetyl-CoA is bound by residues 406 to 407 (NY), serine 425, alanine 443, and arginine 460.

In the N-terminal section; belongs to the N-acetylglucosamine-1-phosphate uridyltransferase family. It in the C-terminal section; belongs to the transferase hexapeptide repeat family. As to quaternary structure, homotrimer. The cofactor is Mg(2+).

The protein localises to the cytoplasm. The enzyme catalyses alpha-D-glucosamine 1-phosphate + acetyl-CoA = N-acetyl-alpha-D-glucosamine 1-phosphate + CoA + H(+). It carries out the reaction N-acetyl-alpha-D-glucosamine 1-phosphate + UTP + H(+) = UDP-N-acetyl-alpha-D-glucosamine + diphosphate. It functions in the pathway nucleotide-sugar biosynthesis; UDP-N-acetyl-alpha-D-glucosamine biosynthesis; N-acetyl-alpha-D-glucosamine 1-phosphate from alpha-D-glucosamine 6-phosphate (route II): step 2/2. The protein operates within nucleotide-sugar biosynthesis; UDP-N-acetyl-alpha-D-glucosamine biosynthesis; UDP-N-acetyl-alpha-D-glucosamine from N-acetyl-alpha-D-glucosamine 1-phosphate: step 1/1. It participates in bacterial outer membrane biogenesis; LPS lipid A biosynthesis. Functionally, catalyzes the last two sequential reactions in the de novo biosynthetic pathway for UDP-N-acetylglucosamine (UDP-GlcNAc). The C-terminal domain catalyzes the transfer of acetyl group from acetyl coenzyme A to glucosamine-1-phosphate (GlcN-1-P) to produce N-acetylglucosamine-1-phosphate (GlcNAc-1-P), which is converted into UDP-GlcNAc by the transfer of uridine 5-monophosphate (from uridine 5-triphosphate), a reaction catalyzed by the N-terminal domain. This is Bifunctional protein GlmU from Geobacter sulfurreducens (strain ATCC 51573 / DSM 12127 / PCA).